Consider the following 401-residue polypeptide: Imidazolonepropionase (401 aa).

2 residues coordinate Fe(3+): His-70 and His-72. The Zn(2+) site is built by His-70 and His-72. 3 residues coordinate 4-imidazolone-5-propanoate: Arg-79, Tyr-142, and His-175. N-formimidoyl-L-glutamate is bound at residue Tyr-142. His-240 contributes to the Fe(3+) binding site. Position 240 (His-240) interacts with Zn(2+). Gln-243 contributes to the 4-imidazolone-5-propanoate binding site. Asp-315 is a Fe(3+) binding site. Asp-315 is a binding site for Zn(2+). N-formimidoyl-L-glutamate is bound by residues Asn-317 and Gly-319. Ser-320 contributes to the 4-imidazolone-5-propanoate binding site.

Belongs to the metallo-dependent hydrolases superfamily. HutI family. Zn(2+) serves as cofactor. The cofactor is Fe(3+).

It is found in the cytoplasm. The catalysed reaction is 4-imidazolone-5-propanoate + H2O = N-formimidoyl-L-glutamate. The protein operates within amino-acid degradation; L-histidine degradation into L-glutamate; N-formimidoyl-L-glutamate from L-histidine: step 3/3. Catalyzes the hydrolytic cleavage of the carbon-nitrogen bond in imidazolone-5-propanoate to yield N-formimidoyl-L-glutamate. It is the third step in the universal histidine degradation pathway. This is Imidazolonepropionase from Ruegeria pomeroyi (strain ATCC 700808 / DSM 15171 / DSS-3) (Silicibacter pomeroyi).